We begin with the raw amino-acid sequence, 342 residues long: Methylthioribose-1-phosphate isomerase (342 aa).

Substrate-binding positions include 49 to 51 (RGA), R86, and Q187. D228 functions as the Proton donor in the catalytic mechanism. 238–239 (NK) is a substrate binding site.

The protein belongs to the eIF-2B alpha/beta/delta subunits family. MtnA subfamily.

The enzyme catalyses 5-(methylsulfanyl)-alpha-D-ribose 1-phosphate = 5-(methylsulfanyl)-D-ribulose 1-phosphate. It functions in the pathway amino-acid biosynthesis; L-methionine biosynthesis via salvage pathway; L-methionine from S-methyl-5-thio-alpha-D-ribose 1-phosphate: step 1/6. Functionally, catalyzes the interconversion of methylthioribose-1-phosphate (MTR-1-P) into methylthioribulose-1-phosphate (MTRu-1-P). This is Methylthioribose-1-phosphate isomerase from Enterobacter sp. (strain 638).